A 101-amino-acid polypeptide reads, in one-letter code: Small ribosomal subunit protein uS14 (101 aa).

Belongs to the universal ribosomal protein uS14 family. As to quaternary structure, part of the 30S ribosomal subunit. Contacts proteins S3 and S10.

Its function is as follows. Binds 16S rRNA, required for the assembly of 30S particles and may also be responsible for determining the conformation of the 16S rRNA at the A site. This is Small ribosomal subunit protein uS14 from Protochlamydia amoebophila (strain UWE25).